Consider the following 210-residue polypeptide: MNPLRVKLDALISKTSLTVTEQQREQLVGYVQLLDKWNKAYNLTSVRDPMEMLVKHILDSLVVSPHLVGERFIDVGSGPGLPGIPLAIMHPDKEFVLLDSLGKRIRFLKQVIHDLKINNVLPVQSRVEEFDPESGFDGVLSRAFASMTDMVNWCQHLPKPNAGVFLALKGVRPDDEITLLPEWCSVTDIKALQVPELEGERHLVILSRKG.

S-adenosyl-L-methionine contacts are provided by residues glycine 76, leucine 81, 127-128 (VE), and arginine 142.

Belongs to the methyltransferase superfamily. RNA methyltransferase RsmG family.

The protein localises to the cytoplasm. The enzyme catalyses guanosine(527) in 16S rRNA + S-adenosyl-L-methionine = N(7)-methylguanosine(527) in 16S rRNA + S-adenosyl-L-homocysteine. Specifically methylates the N7 position of guanine in position 527 of 16S rRNA. In Vibrio cholerae serotype O1 (strain ATCC 39541 / Classical Ogawa 395 / O395), this protein is Ribosomal RNA small subunit methyltransferase G.